The primary structure comprises 163 residues: Neurotrophin-3 (163 aa).

Residues 1 to 3 (IQS) form the signal peptide. Positions 4–119 (TSMDQGILTE…VLNRTSRRKR (116 aa)) are excised as a propeptide. N112 carries an N-linked (GlcNAc...) asparagine glycan.

The protein belongs to the NGF-beta family.

The protein localises to the secreted. Functionally, seems to promote the survival of visceral and proprioceptive sensory neurons. The sequence is that of Neurotrophin-3 (NTF3) from Eryx conicus (Rough-scaled sand boa).